We begin with the raw amino-acid sequence, 251 residues long: uncharacterized protein (251 aa).

A signal peptide spans 1 to 18 (MKILIILSIILCSLFGRA).

This sequence belongs to the MlaA family.

This is an uncharacterized protein from Rickettsia prowazekii (strain Madrid E).